Here is a 480-residue protein sequence, read N- to C-terminus: Ribosomal RNA small subunit methyltransferase F (480 aa).

S-adenosyl-L-methionine contacts are provided by residues 125-131 (AAAPGSK), glutamate 149, aspartate 176, and aspartate 194. Cysteine 247 acts as the Nucleophile in catalysis.

Belongs to the class I-like SAM-binding methyltransferase superfamily. RsmB/NOP family.

Its subcellular location is the cytoplasm. It catalyses the reaction cytidine(1407) in 16S rRNA + S-adenosyl-L-methionine = 5-methylcytidine(1407) in 16S rRNA + S-adenosyl-L-homocysteine + H(+). Specifically methylates the cytosine at position 1407 (m5C1407) of 16S rRNA. This Enterobacter sp. (strain 638) protein is Ribosomal RNA small subunit methyltransferase F.